Reading from the N-terminus, the 194-residue chain is Imidazoleglycerol-phosphate dehydratase (194 aa).

This sequence belongs to the imidazoleglycerol-phosphate dehydratase family.

The protein resides in the cytoplasm. The catalysed reaction is D-erythro-1-(imidazol-4-yl)glycerol 3-phosphate = 3-(imidazol-4-yl)-2-oxopropyl phosphate + H2O. Its pathway is amino-acid biosynthesis; L-histidine biosynthesis; L-histidine from 5-phospho-alpha-D-ribose 1-diphosphate: step 6/9. The chain is Imidazoleglycerol-phosphate dehydratase from Chlorobaculum parvum (strain DSM 263 / NCIMB 8327) (Chlorobium vibrioforme subsp. thiosulfatophilum).